Consider the following 144-residue polypeptide: Transcriptional regulator SlyA (144 aa).

One can recognise an HTH marR-type domain in the interval 2 to 135 (ESPLGSDLAR…LLHLIRKLEQ (134 aa)). Residues 49–72 (QIQLAKAIGIEQPSLVRTLDQLEE) constitute a DNA-binding region (H-T-H motif).

It belongs to the SlyA family. As to quaternary structure, homodimer.

Functionally, transcription regulator that can specifically activate or repress expression of target genes. In Klebsiella pneumoniae (strain 342), this protein is Transcriptional regulator SlyA.